Reading from the N-terminus, the 225-residue chain is Insulin-induced gene 2 protein (225 aa).

Residues 1-28 (MAEGETESPRPKKCGPYISSVTSQSVNV) are Cytoplasmic-facing. Residues 29–51 (VIRGVVLFFIGVFLALVLNLLQI) form a helical membrane-spanning segment. The Lumenal segment spans residues 52-70 (QRNVTLFPPDVITSIFSSA). A helical transmembrane segment spans residues 71 to 88 (WWVPPCCGTASAVIGLLY). Topologically, residues 89–103 (PCIDRHLGEPHKFKR) are cytoplasmic. A helical membrane pass occupies residues 104–126 (EWSSVMRCVAVFVGINHASAKVD). The Lumenal segment spans residues 127-129 (FDN). Residues 130 to 148 (NFQFSLTLAALSVGLWWTF) traverse the membrane as a helical segment. Residues 149-153 (DRSRS) lie on the Cytoplasmic side of the membrane. Position 151 is a phosphoserine (serine 151). A helical transmembrane segment spans residues 154-175 (GFGLGVGIAFLATVVTQLLVYN). Residues 176–189 (GVYQYTSPDFLYVR) are Lumenal-facing. Residues 190-207 (SWLPCIFFAGGITMGNIG) form a helical membrane-spanning segment. Residues 208–225 (RQLAMYECKVIAEKSHQE) are Cytoplasmic-facing. Position 215 is a cysteine sulfenic acid (-SOH); alternate (cysteine 215). A Glycyl cysteine thioester (Cys-Gly) (interchain with G-Cter in ubiquitin); alternate cross-link involves residue cysteine 215. The KxHxx signature appears at 219 to 225 (AEKSHQE).

It belongs to the INSIG family. As to quaternary structure, interacts with SCAP; interaction is direct and only takes place in the presence of sterols; it prevents interaction between SCAP and the coat protein complex II (COPII). Associates with the SCAP-SREBP complex (composed of SCAP and SREBF1/SREBP1 or SREBF2/SREBP2); association is mediated via its interaction with SCAP and only takes place in the presence of sterols. Interacts with RNF139. Interacts with RNF145. Post-translationally, phosphorylation at Ser-151 by PCK1 reduces binding to oxysterol, disrupting the interaction between INSIG2 and SCAP, thereby promoting nuclear translocation of SREBP proteins (SREBF1/SREBP1 or SREBF2/SREBP2) and subsequent transcription of downstream lipogenesis-related genes. In terms of processing, polyubiquitinated by AMFR/gp78 at Cys-215 in some tissues such as adipose tissues, undifferentiated myoblasts and liver, leading to its degradation. In differentiated myotubes, Cys-215 oxidation prevents ubiquitination at the same site, resulting in protein stabilization. Oxidized at Cys-215 in differentiated myotubes, preventing ubiquitination at the same site, and resulting in protein stabilization. Expressed in liver, testis, kidney, spleen, intestine, brain and adrenal gland.

It localises to the endoplasmic reticulum membrane. Oxysterol-binding protein that mediates feedback control of cholesterol synthesis by controlling both endoplasmic reticulum to Golgi transport of SCAP and degradation of HMGCR. Acts as a negative regulator of cholesterol biosynthesis by mediating the retention of the SCAP-SREBP complex in the endoplasmic reticulum, thereby blocking the processing of sterol regulatory element-binding proteins (SREBPs) SREBF1/SREBP1 and SREBF2/SREBP2. Binds oxysterol, including 22-hydroxycholesterol, 24-hydroxycholesterol, 25-hydroxycholesterol and 27-hydroxycholesterol, regulating interaction with SCAP and retention of the SCAP-SREBP complex in the endoplasmic reticulum. In presence of oxysterol, interacts with SCAP, retaining the SCAP-SREBP complex in the endoplasmic reticulum, thereby preventing SCAP from escorting SREBF1/SREBP1 and SREBF2/SREBP2 to the Golgi. Sterol deprivation or phosphorylation by PCK1 reduce oxysterol-binding, disrupting the interaction between INSIG2 and SCAP, thereby promoting Golgi transport of the SCAP-SREBP complex, followed by processing and nuclear translocation of SREBF1/SREBP1 and SREBF2/SREBP2. Also regulates cholesterol synthesis by regulating degradation of HMGCR: initiates the sterol-mediated ubiquitin-mediated endoplasmic reticulum-associated degradation (ERAD) of HMGCR via recruitment of the reductase to the ubiquitin ligase RNF139. The protein is Insulin-induced gene 2 protein of Mus musculus (Mouse).